Consider the following 275-residue polypeptide: S-formylglutathione hydrolase (275 aa).

Catalysis depends on charge relay system residues serine 145, aspartate 221, and histidine 254.

It belongs to the esterase D family.

The catalysed reaction is S-formylglutathione + H2O = formate + glutathione + H(+). In terms of biological role, serine hydrolase involved in the detoxification of formaldehyde. Hydrolyzes S-formylglutathione to glutathione and formate. This chain is S-formylglutathione hydrolase, found in Haemophilus influenzae (strain ATCC 51907 / DSM 11121 / KW20 / Rd).